We begin with the raw amino-acid sequence, 853 residues long: FIGNL1-interacting regulator of recombination and mitosis (853 aa).

Phosphoserine; by PLK1 is present on residues serine 43 and serine 744. Residue lysine 792 is modified to N6-acetyllysine.

Interacts (via its N-terminal region) with PLK1; controls PLK1 kinase activity. Interacts (via the KVVXF motif) with PPP1CC; controls PLK1 kinase activity. Interacts with FIGNL1; may regulate homologous recombination. Post-translationally, phosphorylation at Ser-43 by PLK1 strengthens FIRRM-PLK1 interaction. Phosphorylation at Ser-744 by PLK1 negatively regulates its interaction with PPP1CC.

Its subcellular location is the chromosome. The protein resides in the centromere. It is found in the kinetochore. The protein localises to the nucleus. It localises to the midbody. Its subcellular location is the cytoplasm. The protein resides in the cytoskeleton. It is found in the spindle. Regulates PLK1 kinase activity at kinetochores and promotes faithful chromosome segregation in prometaphase by bridging kinase and phosphatase activities. Phosphorylation of FIRRM by PLK1 negatively regulates its interaction with the phosphatase, PPP1CC, thus creating a negative feedback loop for maintaining proper PLK1 kinase activity during mitosis. In complex with FIGL1 may regulate homologous recombination. The chain is FIGNL1-interacting regulator of recombination and mitosis from Homo sapiens (Human).